The chain runs to 346 residues: Probable galacturonosyltransferase-like 6 (346 aa).

A helical; Signal-anchor for type II membrane protein transmembrane segment spans residues 1 to 21 (MLWITRFAGLFSAAMAVIVLS). Over 22–346 (PSLQSFPPAA…TPYDLYRHSH (325 aa)) the chain is Lumenal. N-linked (GlcNAc...) asparagine glycosylation is present at Asn203.

It belongs to the glycosyltransferase 8 family.

It localises to the golgi apparatus membrane. It participates in glycan metabolism; pectin biosynthesis. Its function is as follows. May be involved in pectin and/or xylans biosynthesis in cell walls. This Arabidopsis thaliana (Mouse-ear cress) protein is Probable galacturonosyltransferase-like 6 (GATL6).